Here is a 617-residue protein sequence, read N- to C-terminus: Proline--tRNA ligase (617 aa).

This sequence belongs to the class-II aminoacyl-tRNA synthetase family. ProS type 1 subfamily. As to quaternary structure, homodimer.

The protein resides in the cytoplasm. It carries out the reaction tRNA(Pro) + L-proline + ATP = L-prolyl-tRNA(Pro) + AMP + diphosphate. Catalyzes the attachment of proline to tRNA(Pro) in a two-step reaction: proline is first activated by ATP to form Pro-AMP and then transferred to the acceptor end of tRNA(Pro). As ProRS can inadvertently accommodate and process non-cognate amino acids such as alanine and cysteine, to avoid such errors it has two additional distinct editing activities against alanine. One activity is designated as 'pretransfer' editing and involves the tRNA(Pro)-independent hydrolysis of activated Ala-AMP. The other activity is designated 'posttransfer' editing and involves deacylation of mischarged Ala-tRNA(Pro). The misacylated Cys-tRNA(Pro) is not edited by ProRS. This is Proline--tRNA ligase from Streptococcus pneumoniae (strain ATCC 700669 / Spain 23F-1).